An 864-amino-acid polypeptide reads, in one-letter code: Leucine--tRNA ligase (864 aa).

The 'HIGH' region signature appears at 42–52; sequence PYPSGKLHMGH. The 'KMSKS' region motif lies at 624–628; that stretch reads KMSKS. Lysine 627 serves as a coordination point for ATP.

This sequence belongs to the class-I aminoacyl-tRNA synthetase family.

The protein resides in the cytoplasm. The enzyme catalyses tRNA(Leu) + L-leucine + ATP = L-leucyl-tRNA(Leu) + AMP + diphosphate. In Burkholderia thailandensis (strain ATCC 700388 / DSM 13276 / CCUG 48851 / CIP 106301 / E264), this protein is Leucine--tRNA ligase.